The chain runs to 242 residues: Segregation and condensation protein A (242 aa).

It belongs to the ScpA family. In terms of assembly, component of a cohesin-like complex composed of ScpA, ScpB and the Smc homodimer, in which ScpA and ScpB bind to the head domain of Smc. The presence of the three proteins is required for the association of the complex with DNA.

It is found in the cytoplasm. Functionally, participates in chromosomal partition during cell division. May act via the formation of a condensin-like complex containing Smc and ScpB that pull DNA away from mid-cell into both cell halves. This chain is Segregation and condensation protein A, found in Streptococcus pneumoniae serotype 19F (strain G54).